Reading from the N-terminus, the 396-residue chain is NADH-quinone oxidoreductase subunit D 1 (396 aa).

It belongs to the complex I 49 kDa subunit family. As to quaternary structure, NDH-1 is composed of 14 different subunits. Subunits NuoB, C, D, E, F, and G constitute the peripheral sector of the complex.

Its subcellular location is the cell inner membrane. It catalyses the reaction a quinone + NADH + 5 H(+)(in) = a quinol + NAD(+) + 4 H(+)(out). In terms of biological role, NDH-1 shuttles electrons from NADH, via FMN and iron-sulfur (Fe-S) centers, to quinones in the respiratory chain. The immediate electron acceptor for the enzyme in this species is believed to be ubiquinone. Couples the redox reaction to proton translocation (for every two electrons transferred, four hydrogen ions are translocated across the cytoplasmic membrane), and thus conserves the redox energy in a proton gradient. The sequence is that of NADH-quinone oxidoreductase subunit D 1 from Sinorhizobium medicae (strain WSM419) (Ensifer medicae).